The sequence spans 367 residues: DNA replication and repair protein RecF (367 aa).

An ATP-binding site is contributed by 30–37; that stretch reads GANGSGKT.

The protein belongs to the RecF family.

It is found in the cytoplasm. Functionally, the RecF protein is involved in DNA metabolism; it is required for DNA replication and normal SOS inducibility. RecF binds preferentially to single-stranded, linear DNA. It also seems to bind ATP. The protein is DNA replication and repair protein RecF of Pseudomonas syringae pv. tomato (strain ATCC BAA-871 / DC3000).